The following is a 352-amino-acid chain: C-C chemokine receptor type 5 (352 aa).

Residues 1-30 (MDYSMSTALYDIDYGMSEPCQKIDVKQVAA) lie on the Extracellular side of the membrane. Sulfotyrosine is present on Tyr-3. O-linked (GalNAc...) serine glycosylation is present at Ser-6. A sulfotyrosine mark is found at Tyr-10 and Tyr-14. O-linked (GalNAc...) serine glycosylation is present at Ser-17. 2 disulfides stabilise this stretch: Cys-20–Cys-269 and Cys-101–Cys-178. The helical transmembrane segment at 31-58 (RLLPPLYSLVFIFGFVGNLLVVLILITC) threads the bilayer. Over 59-68 (KKLKSMTDIY) the chain is Cytoplasmic. The chain crosses the membrane as a helical span at residues 69 to 89 (LLNLAISDLLFLLTLPLWAHY). Topologically, residues 90-102 (AAAEWDFGGAMCK) are extracellular. A helical transmembrane segment spans residues 103–124 (VFTGMYHMGYFGGIFFIILLTI). Residues 125–141 (DRYLAIVHAVFALKART) are Cytoplasmic-facing. A helical transmembrane segment spans residues 142–166 (VTFGVVTSGVTWVAAILVSLPDIIF). The Extracellular portion of the chain corresponds to 167–198 (TRSQKEGFRCSCSPHFPASQYQFWKNFHTIMR). A helical transmembrane segment spans residues 199-218 (NILSLVLPLLVMIVCYSGIL). Topologically, residues 219–235 (KTLLRCRNEKRRHRAVR) are cytoplasmic. A helical transmembrane segment spans residues 236–260 (LIFAIMVVYFLFWAPYNVVLLLNTF). At 261 to 277 (QEFFGLNNCSSSNRLDR) the chain is on the extracellular side. A helical transmembrane segment spans residues 278–301 (AMQVTETLGMTHCCINPVVYAFVG). The Cytoplasmic segment spans residues 302–352 (EKFRSYLSAFFRKHVAKRLCKHCPLLPRETPEPASSVYTRSTGEQEISVGL). 2 S-palmitoyl cysteine lipidation sites follow: Cys-321 and Cys-324. The disordered stretch occupies residues 332–352 (PEPASSVYTRSTGEQEISVGL). Ser-336, Ser-337, Ser-342, and Ser-349 each carry phosphoserine; by BARK1. Residues 337–346 (SVYTRSTGEQ) are compositionally biased toward polar residues.

The protein belongs to the G-protein coupled receptor 1 family. Interacts with PRAF2. Efficient ligand binding to CCL3/MIP-1alpha and CCL4/MIP-1beta requires sulfation, O-glycosylation and sialic acid modifications. Glycosylation on Ser-6 is required for efficient binding of CCL4. Interacts with GRK2. Interacts with ARRB1 and ARRB2. Interacts with CNIH4. Interacts with S100A4; this interaction stimulates T-lymphocyte chemotaxis. In terms of processing, sulfated on at least 2 of the N-terminal tyrosines. Sulfation is required for efficient binding of the chemokines, CCL3 and CCL4. Post-translationally, O-glycosylated, but not N-glycosylated. Ser-6 appears to be the major site. Also sialylated glycans present which contribute to chemokine binding. Ser-17 may also be glycosylated and, if so, with small moieties such as a T-antigen. Palmitoylation in the C-terminal is important for cell surface expression. In terms of processing, phosphorylation on serine residues in the C-terminal is stimulated by binding CC chemokines especially by APO-RANTES.

The protein localises to the cell membrane. Its function is as follows. Receptor for a number of inflammatory CC-chemokines including CCL3/MIP-1-alpha, CCL4/MIP-1-beta and RANTES and subsequently transduces a signal by increasing the intracellular calcium ion level. May play a role in the control of granulocytic lineage proliferation or differentiation. Participates in T-lymphocyte migration to the infection site by acting as a chemotactic receptor. This Oryctolagus cuniculus (Rabbit) protein is C-C chemokine receptor type 5 (CCR5).